Consider the following 150-residue polypeptide: Cytochrome c-type biogenesis protein CcmE (150 aa).

Topologically, residues 1–7 are cytoplasmic; sequence MTRKQKR. The chain crosses the membrane as a helical; Signal-anchor for type II membrane protein span at residues 8 to 28; sequence LAIIGGGVAFLTAAVLLVMFA. Topologically, residues 29–150 are periplasmic; it reads FSQAVAYFYV…VTLGGEENIR (122 aa). Heme contacts are provided by His-123 and Tyr-127.

Belongs to the CcmE/CycJ family.

The protein localises to the cell inner membrane. Functionally, heme chaperone required for the biogenesis of c-type cytochromes. Transiently binds heme delivered by CcmC and transfers the heme to apo-cytochromes in a process facilitated by CcmF and CcmH. This is Cytochrome c-type biogenesis protein CcmE from Rhizobium meliloti (strain 1021) (Ensifer meliloti).